The primary structure comprises 391 residues: Serine acetyltransferase 3, mitochondrial (391 aa).

Disordered regions lie at residues 40–82 and 353–375; these read KHHT…HDDE and VGNP…IPGL. Pro residues predominate over residues 45–56; it reads SPPPSPPPPPPM.

It belongs to the transferase hexapeptide repeat family. Homomultimer. Interacts with OASC. Component of the cysteine synthase complex (CSC) composed of two OAS-TL dimers and one SAT hexamer. As to expression, ubiquitous with higher levels in leaves and siliques. Localized in vascular tissues, particularly in phloem.

Its subcellular location is the mitochondrion. It carries out the reaction L-serine + acetyl-CoA = O-acetyl-L-serine + CoA. Its pathway is amino-acid biosynthesis; L-cysteine biosynthesis; L-cysteine from L-serine: step 1/2. The chain is Serine acetyltransferase 3, mitochondrial (SAT3) from Arabidopsis thaliana (Mouse-ear cress).